Here is a 212-residue protein sequence, read N- to C-terminus: Large ribosomal subunit protein uL3 (212 aa).

The tract at residues 133–152 is disordered; sequence RGSMGHGSKYHRRPGSLGAK.

The protein belongs to the universal ribosomal protein uL3 family. Part of the 50S ribosomal subunit. Forms a cluster with proteins L14 and L19.

One of the primary rRNA binding proteins, it binds directly near the 3'-end of the 23S rRNA, where it nucleates assembly of the 50S subunit. This chain is Large ribosomal subunit protein uL3, found in Syntrophomonas wolfei subsp. wolfei (strain DSM 2245B / Goettingen).